An 856-amino-acid polypeptide reads, in one-letter code: 3-hydroxy-3-methylglutaryl-coenzyme A reductase (856 aa).

4 consecutive transmembrane segments (helical) span residues 12-32 (FCAS…VCML), 89-109 (ILGI…SSVI), 123-143 (LFFF…QFAL), and 190-210 (VLCC…MTFY). Asn-326 carries N-linked (GlcNAc...) asparagine glycosylation. A helical transmembrane segment spans residues 344–364 (SADHIVILILLLALAVKFVFF). The tract at residues 365–443 (ETRDELTTTR…CEVMALVTSG (79 aa)) is linker. Asn-412 is a glycosylation site (N-linked (GlcNAc...) asparagine). A catalytic region spans residues 443–771 (GHIAGYQLEK…SCTMPSIEIG (329 aa)). Catalysis depends on charge relay system residues Glu-528 and Lys-659. An N-linked (GlcNAc...) asparagine glycan is attached at Asn-700. Residue Asp-735 is the Charge relay system of the active site. His-834 acts as the Proton donor in catalysis. The interval 836–856 (RHNRSSVSTSGSEPSTPACKS) is disordered. N-linked (GlcNAc...) asparagine glycosylation is present at Asn-838. Residues 840–856 (SSVSTSGSEPSTPACKS) are compositionally biased toward low complexity.

The protein belongs to the HMG-CoA reductase family.

Its subcellular location is the endoplasmic reticulum membrane. It catalyses the reaction (R)-mevalonate + 2 NADP(+) + CoA = (3S)-3-hydroxy-3-methylglutaryl-CoA + 2 NADPH + 2 H(+). It participates in metabolic intermediate biosynthesis; (R)-mevalonate biosynthesis; (R)-mevalonate from acetyl-CoA: step 3/3. Its activity is regulated as follows. The activity of HMG-CoA-reductase is suppressed by exogenous mevalonate. Its function is as follows. Synthesis of mevalonate for the production of non-sterol isoprenoids, which are essential for growth differentiation. The protein is 3-hydroxy-3-methylglutaryl-coenzyme A reductase of Blattella germanica (German cockroach).